Here is a 550-residue protein sequence, read N- to C-terminus: Chaperonin GroEL 1 (550 aa).

ATP contacts are provided by residues 30–33, lysine 51, 87–91, glycine 415, and aspartate 496; these read TLGP and DGTTT.

The protein belongs to the chaperonin (HSP60) family. As to quaternary structure, forms a cylinder of 14 subunits composed of two heptameric rings stacked back-to-back. Interacts with the co-chaperonin GroES.

It is found in the cytoplasm. It carries out the reaction ATP + H2O + a folded polypeptide = ADP + phosphate + an unfolded polypeptide.. Its function is as follows. Together with its co-chaperonin GroES, plays an essential role in assisting protein folding. The GroEL-GroES system forms a nano-cage that allows encapsulation of the non-native substrate proteins and provides a physical environment optimized to promote and accelerate protein folding. This Rhodopseudomonas palustris (strain HaA2) protein is Chaperonin GroEL 1.